Consider the following 349-residue polypeptide: 5-deoxyribose 1-phosphate isomerase (349 aa).

Substrate contacts are provided by residues 49–51 (RGA), Arg92, and Gln199. Catalysis depends on Asp240, which acts as the Proton donor. Substrate is bound at residue 250–251 (NK).

Belongs to the EIF-2B alpha/beta/delta subunits family. DrdI subfamily.

It catalyses the reaction 5-deoxy-alpha-D-ribose 1-phosphate = 5-deoxy-D-ribulose 1-phosphate. Its pathway is carbohydrate degradation. Functionally, catalyzes the isomerization of 5-deoxy-alpha-D-ribose 1-phosphate to 5-deoxy-D-ribulose 1-phosphate, as part of a 5-deoxyribose salvage pathway that recycles this toxic radical SAM enzyme by-product to mainstream metabolites. The chain is 5-deoxyribose 1-phosphate isomerase from Clostridium botulinum (strain Loch Maree / Type A3).